The chain runs to 555 residues: 2-succinyl-5-enolpyruvyl-6-hydroxy-3-cyclohexene-1-carboxylate synthase (555 aa).

The protein belongs to the TPP enzyme family. MenD subfamily. As to quaternary structure, homodimer. The cofactor is Mg(2+). Mn(2+) is required as a cofactor. It depends on thiamine diphosphate as a cofactor.

It carries out the reaction isochorismate + 2-oxoglutarate + H(+) = 5-enolpyruvoyl-6-hydroxy-2-succinyl-cyclohex-3-ene-1-carboxylate + CO2. Its pathway is quinol/quinone metabolism; 1,4-dihydroxy-2-naphthoate biosynthesis; 1,4-dihydroxy-2-naphthoate from chorismate: step 2/7. The protein operates within quinol/quinone metabolism; menaquinone biosynthesis. Functionally, catalyzes the thiamine diphosphate-dependent decarboxylation of 2-oxoglutarate and the subsequent addition of the resulting succinic semialdehyde-thiamine pyrophosphate anion to isochorismate to yield 2-succinyl-5-enolpyruvyl-6-hydroxy-3-cyclohexene-1-carboxylate (SEPHCHC). This chain is 2-succinyl-5-enolpyruvyl-6-hydroxy-3-cyclohexene-1-carboxylate synthase, found in Cronobacter sakazakii (strain ATCC BAA-894) (Enterobacter sakazakii).